The sequence spans 860 residues: Protein argonaute-2 (860 aa).

Tyrosine 2 is modified (3'-nitrotyrosine). A PAZ domain is found at 230 to 349 (PVIEFVCEVL…LPLEVCNIVA (120 aa)). Residues 312 to 317 (YFKDRH) are interaction with guide RNA. Position 388 is a phosphoserine (serine 388). Residues 518–819 (LVVVILPGKT…VAFRARYHLV (302 aa)) enclose the Piwi domain. The interval 525-567 (GKTPVYAEVKRVGDTVLGMATQCVQMKNVQRTTPQTLSNLCLK) is interaction with guide RNA. An interaction with GW182 family members region spans residues 588–591 (FQQP). Aspartate 598 is an a divalent metal cation binding site. The segment at 651–661 (LIQFYKSTRFK) is interaction with GW182 family members. Aspartate 670 lines the a divalent metal cation pocket. Proline 701 is subject to 4-hydroxyproline. Interaction with guide RNA stretches follow at residues 710–711 (KR), 754–762 (HAGIQGTSR), and 791–813 (YVRCTRSVSIPAPAYYAHLVAFR). Histidine 808 is a binding site for a divalent metal cation. A phosphoserine mark is found at serine 825, serine 829, serine 832, and serine 835.

The protein belongs to the argonaute family. Ago subfamily. Interacts with DICER1 through its Piwi domain and with TARBP2 during assembly of the RNA-induced silencing complex (RISC). Together, DICER1, AGO2 and TARBP2 constitute the trimeric RISC loading complex (RLC), or micro-RNA (miRNA) loading complex (miRLC). Within the RLC/miRLC, DICER1 and TARBP2 are required to process precursor miRNAs (pre-miRNAs) to mature miRNAs and then load them onto AGO2. AGO2 bound to the mature miRNA constitutes the minimal RISC and may subsequently dissociate from DICER1 and TARBP2. Note however that the term RISC has also been used to describe the trimeric RLC/miRLC. The formation of RISC complexes containing siRNAs rather than miRNAs appears to occur independently of DICER1. Interacts with AGO1. Also interacts with DDB1, DDX5, DDX6, DDX20, DHX30, DHX36, DDX47, DHX9, ELAVL, FXR1, GEMIN4, HNRNPF, IGF2BP1, ILF3, IMP8, MATR3, PABPC1, PRMT5, P4HA1, P4HB, RBM4, SART3, TNRC6A, TNRC6B, UPF1 and YBX1. Interacts with the P-body components DCP1A and XRN1. Associates with polysomes and messenger ribonucleoproteins (mNRPs). Interacts with RBM4; the interaction is modulated under stress-induced conditions, occurs under both cell proliferation and differentiation conditions and in an RNA- and phosphorylation-independent manner. Interacts with LIMD1, WTIP and AJUBA. Interacts with TRIM71; the interaction increases in presence of RNA. Interacts with APOBEC3G in an RNA-dependent manner. Interacts with APOBEC3A, APOBEC3C, APOBEC3F and APOBEC3H. Interacts with DICER1, TARBP2, EIF6, MOV10 and RPL7A (60S ribosome subunit); they form a large RNA-induced silencing complex (RISC). Interacts with FMR1. Interacts with ZFP36. Interacts with RC3H1; the interaction is RNA independent. Found in a complex, composed of AGO2, CHD7 and ARB2A. Interacts with SND1 and SYT11. Interacts with CLNK. Interacts with GARRE1. Interacts with GRB2; this interaction is important for the formation of a ternary complex containing GRB2, AGO2 and DICER1. The cofactor is Mg(2+). It depends on Mn(2+) as a cofactor. Hydroxylated. 4-hydroxylation appears to enhance protein stability but is not required for miRNA-binding or endonuclease activity. In terms of processing, ubiquitinated on surface-exposed lysines by a SCF-like E3 ubiquitin-protein ligase complex containing ZSWIM8 during target-directed microRNA degradation (TDMD), a process that mediates degradation of microRNAs (miRNAs). Ubiquitination by the SCF-like E3 ubiquitin-protein ligase complex containing ZSWIM8 leads to its subsequent degradation, thereby exposing miRNAs for degradation. ZSWIM8 recognizes and binds AGO2 when it is engaged with a TDMD target. Post-translationally, phosphorylation at Ser-388 by AKT3; leads to up-regulate translational repression of microRNA target and down-regulate endonucleolytic cleavage. A phosphorylation cycle of C-terminal serine cluster (Ser-825-Ser-835) regulates the release of target mRNAs. Target-binding leads to phosphorylation of these residues by CSNK1A1, which reduces the affinity of AGO2 for mRNA and enables target release. The ANKRD52-PPP6C phosphatase complex dephosphorylates the residues, which primes AGO2 for binding a new target.

It localises to the cytoplasm. The protein resides in the P-body. The protein localises to the nucleus. It carries out the reaction Endonucleolytic cleavage to 5'-phosphomonoester.. In terms of biological role, required for RNA-mediated gene silencing (RNAi) by the RNA-induced silencing complex (RISC). The 'minimal RISC' appears to include AGO2 bound to a short guide RNA such as a microRNA (miRNA) or short interfering RNA (siRNA). These guide RNAs direct RISC to complementary mRNAs that are targets for RISC-mediated gene silencing. The precise mechanism of gene silencing depends on the degree of complementarity between the miRNA or siRNA and its target. Binding of RISC to a perfectly complementary mRNA generally results in silencing due to endonucleolytic cleavage of the mRNA specifically by AGO2. Binding of RISC to a partially complementary mRNA results in silencing through inhibition of translation, and this is independent of endonuclease activity. May inhibit translation initiation by binding to the 7-methylguanosine cap, thereby preventing the recruitment of the translation initiation factor eIF4-E. May also inhibit translation initiation via interaction with EIF6, which itself binds to the 60S ribosomal subunit and prevents its association with the 40S ribosomal subunit. The inhibition of translational initiation leads to the accumulation of the affected mRNA in cytoplasmic processing bodies (P-bodies), where mRNA degradation may subsequently occur. In some cases RISC-mediated translational repression is also observed for miRNAs that perfectly match the 3' untranslated region (3'-UTR). Can also up-regulate the translation of specific mRNAs under certain growth conditions. Binds to the AU element of the 3'-UTR of the TNF (TNF-alpha) mRNA and up-regulates translation under conditions of serum starvation. Also required for transcriptional gene silencing (TGS), in which short RNAs known as antigene RNAs or agRNAs direct the transcriptional repression of complementary promoter regions. The sequence is that of Protein argonaute-2 (Ago2) from Rattus norvegicus (Rat).